Consider the following 393-residue polypeptide: Phosphoglycerate kinase (393 aa).

Substrate contacts are provided by residues 21 to 23 (DLN), Arg-36, 59 to 62 (HLGR), Arg-114, and Arg-147. Residues Lys-198, Glu-320, and 346-349 (GGDT) contribute to the ATP site.

The protein belongs to the phosphoglycerate kinase family. In terms of assembly, monomer.

Its subcellular location is the cytoplasm. It catalyses the reaction (2R)-3-phosphoglycerate + ATP = (2R)-3-phospho-glyceroyl phosphate + ADP. The protein operates within carbohydrate degradation; glycolysis; pyruvate from D-glyceraldehyde 3-phosphate: step 2/5. The sequence is that of Phosphoglycerate kinase from Methylobacillus flagellatus (strain ATCC 51484 / DSM 6875 / VKM B-1610 / KT).